The chain runs to 359 residues: uncharacterized protein (359 aa).

A signal peptide spans 1-15 (MSIVLAIDTATAAVT). In terms of domain architecture, N-acetyltransferase spans 212-359 (IVIGTLTPAD…DAYLMRREAQ (148 aa)).

This is an uncharacterized protein from Mycobacterium leprae (strain TN).